Here is a 221-residue protein sequence, read N- to C-terminus: MALVVKDIVKNFGEGLSETKVLKGINFEVEQGEFVILNGASGSGKTTLLTILGGLLSQTSGTVLYNDAPLFDKQHRSSDLRLEDIGFIFQSSHLVPYLKVIEQLTLVGQEAGMTKQQSSKRAIQLLKNIGLEDRLNVYPHQLSGGEKQRVAIMRAFMNNPKIILADEPTASLDADRATKVVEMIRQQIKEQQMIGIMITHDRRLFEYADRVIELEDGKITD.

Residues 3-221 (LVVKDIVKNF…IELEDGKITD (219 aa)) form the ABC transporter domain. 39–46 (GASGSGKT) provides a ligand contact to ATP.

This sequence belongs to the ABC transporter superfamily. HrtA family. In terms of assembly, the complex is composed of two ATP-binding proteins (HrtA), two transmembrane proteins (HrtB) and a solute-binding protein.

The protein resides in the cell membrane. In terms of biological role, part of the ABC transporter complex hrt involved in hemin import. Responsible for energy coupling to the transport system. In Staphylococcus aureus (strain MRSA252), this protein is Putative hemin import ATP-binding protein HrtA (hrtA).